Consider the following 650-residue polypeptide: Fructose-1,6-bisphosphatase class 3 (650 aa).

This sequence belongs to the FBPase class 3 family. The cofactor is Mn(2+).

It catalyses the reaction beta-D-fructose 1,6-bisphosphate + H2O = beta-D-fructose 6-phosphate + phosphate. The protein operates within carbohydrate biosynthesis; gluconeogenesis. This is Fructose-1,6-bisphosphatase class 3 from Finegoldia magna (strain ATCC 29328 / DSM 20472 / WAL 2508) (Peptostreptococcus magnus).